Here is a 36-residue protein sequence, read N- to C-terminus: Pancreatic polypeptide (36 aa).

The residue at position 36 (Tyr-36) is a Tyrosine amide.

It belongs to the NPY family.

The protein resides in the secreted. Hormone secreted by pancreatic cells that acts as a regulator of pancreatic and gastrointestinal functions probably by signaling through the G protein-coupled receptor NPY4R2. In Didelphis virginiana (North American opossum), this protein is Pancreatic polypeptide (PPY).